Here is a 116-residue protein sequence, read N- to C-terminus: Large ribosomal subunit protein bL20 (116 aa).

It belongs to the bacterial ribosomal protein bL20 family.

In terms of biological role, binds directly to 23S ribosomal RNA and is necessary for the in vitro assembly process of the 50S ribosomal subunit. It is not involved in the protein synthesizing functions of that subunit. The chain is Large ribosomal subunit protein bL20 (rplT) from Helicobacter pylori (strain ATCC 700392 / 26695) (Campylobacter pylori).